We begin with the raw amino-acid sequence, 188 residues long: Elongation factor P (188 aa).

At Lys34 the chain carries N6-(3,6-diaminohexanoyl)-5-hydroxylysine.

The protein belongs to the elongation factor P family. May be beta-lysylated on the epsilon-amino group of Lys-34 by the combined action of EpmA and EpmB, and then hydroxylated on the C5 position of the same residue by EpmC (if this protein is present). Lysylation is critical for the stimulatory effect of EF-P on peptide-bond formation. The lysylation moiety may extend toward the peptidyltransferase center and stabilize the terminal 3-CCA end of the tRNA. Hydroxylation of the C5 position on Lys-34 may allow additional potential stabilizing hydrogen-bond interactions with the P-tRNA.

It is found in the cytoplasm. It functions in the pathway protein biosynthesis; polypeptide chain elongation. Its function is as follows. Involved in peptide bond synthesis. Alleviates ribosome stalling that occurs when 3 or more consecutive Pro residues or the sequence PPG is present in a protein, possibly by augmenting the peptidyl transferase activity of the ribosome. Modification of Lys-34 is required for alleviation. This is Elongation factor P from Photobacterium profundum (strain SS9).